We begin with the raw amino-acid sequence, 393 residues long: NAD(P)H-quinone oxidoreductase subunit H, chloroplastic (393 aa).

Belongs to the complex I 49 kDa subunit family. NDH is composed of at least 16 different subunits, 5 of which are encoded in the nucleus.

The protein resides in the plastid. It localises to the chloroplast thylakoid membrane. It catalyses the reaction a plastoquinone + NADH + (n+1) H(+)(in) = a plastoquinol + NAD(+) + n H(+)(out). It carries out the reaction a plastoquinone + NADPH + (n+1) H(+)(in) = a plastoquinol + NADP(+) + n H(+)(out). NDH shuttles electrons from NAD(P)H:plastoquinone, via FMN and iron-sulfur (Fe-S) centers, to quinones in the photosynthetic chain and possibly in a chloroplast respiratory chain. The immediate electron acceptor for the enzyme in this species is believed to be plastoquinone. Couples the redox reaction to proton translocation, and thus conserves the redox energy in a proton gradient. The protein is NAD(P)H-quinone oxidoreductase subunit H, chloroplastic of Cryptomeria japonica (Japanese cedar).